We begin with the raw amino-acid sequence, 249 residues long: Ditrans,polycis-undecaprenyl-diphosphate synthase ((2E,6E)-farnesyl-diphosphate specific) (249 aa).

Asp18 is an active-site residue. Asp18 lines the Mg(2+) pocket. Residues 19–22 (GNNR), Phe23, Lys31, His35, and 63–65 (SSE) contribute to the substrate site. Asn66 functions as the Proton acceptor in the catalytic mechanism. Substrate contacts are provided by residues Trp67, Arg69, Arg186, and 192–194 (RLS). Glu205 is a Mg(2+) binding site.

Belongs to the UPP synthase family. As to quaternary structure, homodimer. Mg(2+) is required as a cofactor.

It catalyses the reaction 8 isopentenyl diphosphate + (2E,6E)-farnesyl diphosphate = di-trans,octa-cis-undecaprenyl diphosphate + 8 diphosphate. Its function is as follows. Catalyzes the sequential condensation of isopentenyl diphosphate (IPP) with (2E,6E)-farnesyl diphosphate (E,E-FPP) to yield (2Z,6Z,10Z,14Z,18Z,22Z,26Z,30Z,34E,38E)-undecaprenyl diphosphate (di-trans,octa-cis-UPP). UPP is the precursor of glycosyl carrier lipid in the biosynthesis of bacterial cell wall polysaccharide components such as peptidoglycan and lipopolysaccharide. This is Ditrans,polycis-undecaprenyl-diphosphate synthase ((2E,6E)-farnesyl-diphosphate specific) from Acinetobacter baylyi (strain ATCC 33305 / BD413 / ADP1).